Here is a 685-residue protein sequence, read N- to C-terminus: tRNA-dihydrouridine(47) synthase [NAD(P)(+)]-like (685 aa).

Positions 1–12 (MAATAAAAAAAP) are enriched in low complexity. 3 disordered regions span residues 1-91 (MAAT…SSSH), 209-234 (AAND…PLCN), and 257-314 (LIDN…SCRT). Pro residues predominate over residues 13-29 (PADPPDSSPAASSPPRP). The C3H1-type zinc finger occupies 87-118 (KSSSHLCIEVGKSGNVSSCKYGDSCRFSHDID). 2 stretches are compositionally biased toward basic and acidic residues: residues 209–221 (AAND…HDNL) and 273–284 (SKVESDEIDKHG). Residues 287-314 (TLNTNTESEDPNLSNGLEPSNNSSSCRT) are compositionally biased toward polar residues. Residues 338–340 (PLT) and Gln-392 each bind FMN. Residue Cys-423 is the Proton donor of the active site. Residues Lys-462, His-492, 525-527 (NGD), and 550-551 (AR) each bind FMN.

The protein belongs to the Dus family. Dus3 subfamily. It depends on FMN as a cofactor.

It carries out the reaction 5,6-dihydrouridine(47) in tRNA + NAD(+) = uridine(47) in tRNA + NADH + H(+). The catalysed reaction is 5,6-dihydrouridine(47) in tRNA + NADP(+) = uridine(47) in tRNA + NADPH + H(+). It catalyses the reaction a 5,6-dihydrouridine in mRNA + NAD(+) = a uridine in mRNA + NADH + H(+). The enzyme catalyses a 5,6-dihydrouridine in mRNA + NADP(+) = a uridine in mRNA + NADPH + H(+). Its function is as follows. Catalyzes the synthesis of dihydrouridine, a modified base found in the D-loop of most tRNAs. Specifically modifies U47 in cytoplasmic tRNAs. Catalyzes the synthesis of dihydrouridine in some mRNAs, thereby affecting their translation. In Oryza sativa subsp. japonica (Rice), this protein is tRNA-dihydrouridine(47) synthase [NAD(P)(+)]-like.